Here is a 184-residue protein sequence, read N- to C-terminus: Ribosome-recycling factor (184 aa).

This sequence belongs to the RRF family.

The protein resides in the cytoplasm. Its function is as follows. Responsible for the release of ribosomes from messenger RNA at the termination of protein biosynthesis. May increase the efficiency of translation by recycling ribosomes from one round of translation to another. The chain is Ribosome-recycling factor from Acinetobacter baumannii (strain SDF).